The chain runs to 182 residues: UPF0423 protein BRA0381/BS1330_II0378 (182 aa).

The signal sequence occupies residues 1-24; the sequence is MKNLFRTAALMVPLSLALAYGAQA.

It belongs to the UPF0423 family.

In Brucella suis biovar 1 (strain 1330), this protein is UPF0423 protein BRA0381/BS1330_II0378.